The following is a 396-amino-acid chain: Elongation factor Tu (396 aa).

Positions 10 to 205 constitute a tr-type G domain; sequence KPHVNIGTIG…AVDESIPDPV (196 aa). The segment at 19 to 26 is G1; it reads GHVDHGKT. 19–26 contacts GTP; sequence GHVDHGKT. Threonine 26 contacts Mg(2+). The G2 stretch occupies residues 62–66; it reads GITIN. A G3 region spans residues 83–86; the sequence is DAPG. GTP-binding positions include 83–87 and 138–141; these read DAPGH and NKAD. Residues 138–141 form a G4 region; the sequence is NKAD. The G5 stretch occupies residues 175-177; it reads SAL.

It belongs to the TRAFAC class translation factor GTPase superfamily. Classic translation factor GTPase family. EF-Tu/EF-1A subfamily. Monomer.

Its subcellular location is the cytoplasm. The catalysed reaction is GTP + H2O = GDP + phosphate + H(+). In terms of biological role, GTP hydrolase that promotes the GTP-dependent binding of aminoacyl-tRNA to the A-site of ribosomes during protein biosynthesis. The protein is Elongation factor Tu of Mycobacterium avium (strain 104).